A 777-amino-acid polypeptide reads, in one-letter code: Rho guanine nucleotide exchange factor 38 (777 aa).

Position 34 is a phosphothreonine (threonine 34). Residues 35-72 are disordered; that stretch reads DTVVESSVSGDHSGTLRRSQSDRTEYNQKLQEKMTPQG. The span at 37-52 shows a compositional bias: polar residues; sequence VVESSVSGDHSGTLRR. A compositionally biased stretch (basic and acidic residues) spans 53 to 66; sequence SQSDRTEYNQKLQE. Residues 94–285 enclose the DH domain; it reads KREKIIKELI…KDINVNINEL (192 aa). Residues 327-536 enclose the BAR domain; sequence LKILTRGESQ…QNQVLEEIQN (210 aa). Positions 582-645 constitute an SH3 1 domain; the sequence is SAEELYQAKR…YSSFLKPYNP (64 aa). Residues 673 to 694 are disordered; it reads PASDSVTGTSESSIGDSSSSLS. A compositionally biased stretch (low complexity) spans 679 to 694; sequence TGTSESSIGDSSSSLS. The 64-residue stretch at 713–776 folds into the SH3 2 domain; sequence VDEQIFYAVH…PANYLGKMTY (64 aa).

Its function is as follows. May act as a guanine-nucleotide releasing factor. This Homo sapiens (Human) protein is Rho guanine nucleotide exchange factor 38 (ARHGEF38).